A 290-amino-acid chain; its full sequence is Nucleotide-binding protein BPP4038 (290 aa).

Residue 9 to 16 coordinates ATP; the sequence is GISGSGKS. 58–61 contributes to the GTP binding site; it reads DVRS.

Belongs to the RapZ-like family.

Its function is as follows. Displays ATPase and GTPase activities. This Bordetella parapertussis (strain 12822 / ATCC BAA-587 / NCTC 13253) protein is Nucleotide-binding protein BPP4038.